The primary structure comprises 928 residues: Heme/hemopexin-binding protein (928 aa).

A signal peptide spans 1–21 (MYKLNVISLIILTTCSGAAYA). Tandem repeats lie at residues 101 to 106 (NGKVYL), 149 to 154 (KDRQVL), 155 to 160 (KEGLVL), 161 to 166 (KDGQVV), 167 to 172 (KEGQVI), 205 to 210 (NGKVYL), 279 to 284 (NGKVVL), 410 to 415 (NGKVNL), 635 to 640 (NGFVHL), and 674 to 679 (NGKVSM). The interval 101 to 679 (NGKVYLANPN…RLGMNGKVSM (579 aa)) is 6 X 6 AA approximate repeats. The tract at residues 149–172 (KDRQVLKEGLVLKDGQVVKEGQVI) is 4 X 6 AA approximate tandem repeats.

It localises to the secreted. In terms of biological role, binds heme/hemopexin complexes. This Haemophilus influenzae protein is Heme/hemopexin-binding protein (hxuA).